A 394-amino-acid chain; its full sequence is Probable nucleoredoxin 2 (394 aa).

Thioredoxin domains lie at 15-176 (GVGG…QTLE) and 180-327 (SVSG…EMED).

Belongs to the nucleoredoxin family.

It carries out the reaction [protein]-dithiol + NAD(+) = [protein]-disulfide + NADH + H(+). It catalyses the reaction [protein]-dithiol + NADP(+) = [protein]-disulfide + NADPH + H(+). Probable thiol-disulfide oxidoreductase that may participate in various redox reactions. This Oryza sativa subsp. japonica (Rice) protein is Probable nucleoredoxin 2.